Consider the following 314-residue polypeptide: Hydroxyacyl-coenzyme A dehydrogenase, mitochondrial (314 aa).

The N-terminal 12 residues, 1-12 (MAFVTRQFMRSV), are a transit peptide targeting the mitochondrion. NAD(+)-binding positions include 34-39 (GGGLMG) and Asp57. Positions 73 and 80 each coordinate CoA. Position 80 is an N6-succinyllysine (Lys80). N6-acetyllysine; alternate is present on residues Lys81 and Lys87. Lys81 and Lys87 each carry N6-succinyllysine; alternate. Glu122 serves as a coordination point for NAD(+). Lys125 bears the N6-acetyllysine mark. Lys127 contributes to the NAD(+) binding site. The residue at position 127 (Lys127) is an N6-(2-hydroxyisobutyryl)lysine. Lys136 carries the N6-acetyllysine; alternate modification. An N6-succinyllysine; alternate modification is found at Lys136. NAD(+) is bound by residues Ser149 and Asn173. Ser149 serves as a coordination point for CoA. At Lys179 the chain carries N6-acetyllysine. 3 positions are modified to N6-acetyllysine; alternate: Lys185, Lys192, and Lys202. An N6-succinyllysine; alternate mark is found at Lys185, Lys192, and Lys202. Residue Lys206 is modified to N6-succinyllysine. An N6-acetyllysine; alternate mark is found at Lys212 and Lys241. 2 positions are modified to N6-succinyllysine; alternate: Lys212 and Lys241. Residue Lys305 coordinates NAD(+). Position 312 is an N6-acetyllysine; alternate (Lys312). At Lys312 the chain carries N6-succinyllysine; alternate.

The protein belongs to the 3-hydroxyacyl-CoA dehydrogenase family. In terms of assembly, homodimer. Interacts with GLUD1; this interaction inhibits the activation of glutamate dehydrogenase 1 (GLUD1). Post-translationally, succinylation at Lys-81, adjacent to a coenzyme A binding site. Desuccinylated by SIRT5. As to expression, expressed in liver, kidney, pancreas, heart and skeletal muscle.

It is found in the mitochondrion matrix. It carries out the reaction a (3S)-3-hydroxyacyl-CoA + NAD(+) = a 3-oxoacyl-CoA + NADH + H(+). It catalyses the reaction (3S)-3-hydroxybutanoyl-CoA + NAD(+) = acetoacetyl-CoA + NADH + H(+). The enzyme catalyses (3S)-hydroxydecanoyl-CoA + NAD(+) = 3-oxodecanoyl-CoA + NADH + H(+). The catalysed reaction is (3S)-hydroxyhexadecanoyl-CoA + NAD(+) = 3-oxohexadecanoyl-CoA + NADH + H(+). Its pathway is lipid metabolism; fatty acid beta-oxidation. In terms of biological role, mitochondrial fatty acid beta-oxidation enzyme that catalyzes the third step of the beta-oxidation cycle for medium and short-chain 3-hydroxy fatty acyl-CoAs (C4 to C10). Plays a role in the control of insulin secretion by inhibiting the activation of glutamate dehydrogenase 1 (GLUD1), an enzyme that has an important role in regulating amino acid-induced insulin secretion. Plays a role in the maintenance of normal spermatogenesis through the reduction of fatty acid accumulation in the testes. The sequence is that of Hydroxyacyl-coenzyme A dehydrogenase, mitochondrial (HADH) from Homo sapiens (Human).